The following is a 329-amino-acid chain: MKTVLLFVVLVGLAYCDDDGWDMGNFFQQYHQWQQQISSSSSSSSSSSSGGGGSSGGGASGGGGGSSSGGGGASGGGGGGSSGGGGLTKVVLKAGGGGGGGFKSVGGGRGGVTKLVASGGASGGGSVSGGGGGSLALLAGGSAAGGGRSGVVTVSKQPIIINRQVTHVNTGGSGGGVGGGFGGGRGGFGYGLYGGYHHYNPCGYGQVYSYYYGCQSIYKQPARQVYHQPVYQPVQTVHQPVQYYQQPYQYQHSYGQPSYAYQPQTTKYISYSYPQYSSQGSYPTVAGGSAGGFVRGSSGGMGFSSGGIGGHSSYPLSVFKHAKGEKYKL.

The first 16 residues, 1–16 (MKTVLLFVVLVGLAYC), serve as a signal peptide directing secretion. Residues 38–48 (SSSSSSSSSSS) show a composition bias toward low complexity. The interval 38 to 80 (SSSSSSSSSSSSGGGGSSGGGASGGGGGSSSGGGGASGGGGGG) is disordered. The segment covering 49-80 (SGGGGSSGGGASGGGGGSSSGGGGASGGGGGG) has biased composition (gly residues).

In terms of tissue distribution, prismatic layer of shell (at protein level). Expressed primarily in the mantle with highest level in the mantle edge and lower level in the mantle pallium.

It localises to the secreted. This is Serine, glycine and glutamine-rich protein from Pinctada maxima (Silver-lipped pearl oyster).